Consider the following 113-residue polypeptide: Large ribosomal subunit protein bL19 (113 aa).

Belongs to the bacterial ribosomal protein bL19 family.

Its function is as follows. This protein is located at the 30S-50S ribosomal subunit interface and may play a role in the structure and function of the aminoacyl-tRNA binding site. This is Large ribosomal subunit protein bL19 from Rhodococcus jostii (strain RHA1).